We begin with the raw amino-acid sequence, 448 residues long: Chaperone SurA (448 aa).

The signal sequence occupies residues 1–27 (MKKTLRFAAVASGLVASLITVAPSASA). 2 PpiC domains span residues 185 to 288 (QQDL…RLVE) and 301 to 399 (IVQT…QVLG).

It is found in the periplasm. The catalysed reaction is [protein]-peptidylproline (omega=180) = [protein]-peptidylproline (omega=0). Chaperone involved in the correct folding and assembly of outer membrane proteins. Recognizes specific patterns of aromatic residues and the orientation of their side chains, which are found more frequently in integral outer membrane proteins. May act in both early periplasmic and late outer membrane-associated steps of protein maturation. The chain is Chaperone SurA from Burkholderia pseudomallei (strain 1710b).